The following is a 162-amino-acid chain: Tegument protein BLRF2 (162 aa).

The stretch at 12–43 forms a coiled coil; that stretch reads VKAVDMSMEDMAARLARLESENKALKQQVLRG. Positions 118 to 162 are disordered; the sequence is SMLGAKGQPSPGEGTRPRESNDPNATRRARSRSRGREAKKVQISD. Residues 151 to 162 show a composition bias toward basic and acidic residues; sequence RGREAKKVQISD.

This sequence belongs to the herpesviridae BLRF2 family. As to quaternary structure, homooligomer; homooligomerizes and binds double-stranded DNA (dsDNA) cooperatively. Interacts with host CGAS.

Its subcellular location is the virion tegument. It localises to the host cytoplasm. Its function is as follows. Plays a role in the inhibition of host innate immune system by targeting the CGAS enzymatic activity which is the principal cytosolic DNA sensor that detects invading viral DNA. Acts by inhibiting CGAS-DNA phase separation: directly binds double-stranded DNA (dsDNA) in a length dependent but sequence independent manner and is able to form DNA-induced phase separation in infected cells. DNA phase separation of ORF52 mediates disruption of liquid-like droplets in which CGAS is activated, thereby preventing CGAS activity. The sequence is that of Tegument protein BLRF2 from Homo sapiens (Human).